The following is a 2130-amino-acid chain: Highly reducing polyketide synthase anuA (2130 aa).

Positions 1–213 (MKAGVLSGTS…GANCHVILEQ (213 aa)) constitute a Ketosynthase family 3 (KS3) domain. The region spanning 317–644 (FVFTGQGSQW…SFAGNLWLKG (328 aa)) is the Malonyl-CoA:ACP transacylase (MAT) domain. The interval 701–836 (HELLGSLLTG…GSIAIHPRNA (136 aa)) is N-terminal hotdog fold. The region spanning 701 to 1000 (HELLGSLLTG…LSPYQSTSQA (300 aa)) is the PKS/mFAS DH domain. The Proton acceptor; for dehydratase activity role is filled by H733. The C-terminal hotdog fold stretch occupies residues 849–1000 (LESTAKRTWY…LSPYQSTSQA (152 aa)). D914 functions as the Proton donor; for dehydratase activity in the catalytic mechanism. Residues 1405–1722 (GQLDTIYFQQ…SRSRIGKVAI (318 aa)) form the Enoyl reductase (ER) domain. In terms of domain architecture, Ketoreductase (KR) spans 1747–1927 (SYVMVGCLGG…AVAVGLGMIS (181 aa)). The 79-residue stretch at 2047–2125 (TLDEAVLDHI…SLRDLAMTSL (79 aa)) folds into the Carrier domain. The residue at position 2084 (S2084) is an O-(pantetheine 4'-phosphoryl)serine.

The cofactor is pantetheine 4'-phosphate.

It functions in the pathway secondary metabolite biosynthesis. In terms of biological role, highly reducing polyketide synthase; part of the gene cluster that mediates the biosynthesis of annullatin D, an alkylated aromatic polyketide with a fused dihydrobenzofuran lactone ring system that exhibits potent agonistic activities toward the cannabinoid receptors. The annullatin backbone 2-hydroxymethyl-3-pentylphenol is assembled from one acetyl-CoA starter unit and 5 malonyl-CoA elongation units by cooperation of the highly reducing polyketide synthase anuA, the short-chain dehydrogenase anuB and the oxidoreductase anuC, before being hydroxylated at the C-5 alkyl chain by the cytochrome P450 monooxygenase anuE to form (8S)-annullatin E. The prenyltransferase anuH subsequently installs one isoprenyl group at the benzene ring to form (8S)-annullatin J. Enzymatic or nonenzymatic dihydro-benzofuran ring formation between the prenyl and the phenolic hydroxyl groups in (8S)-annullatin J results in two diastereomers (2S,9S)-annullatin H and compound 12. The intermediate (2S,9S)-annullatin H is then converted to (2S,9S)-annullatin D by the FAD-linked oxidoreductase anuG-catalyzed five-member lactone ring formation. The isomer 12 acts as a substrate for the short-chain dehydrogenase anuF and is oxidized to (2R)-annullatin F, which is subsequently acetylated by an acetyltransferase leading to (2R)-annullatin G formation. The remaining enzymes identified within the cluster, anuD, anuI and anuJ, seem not to be involved in annullatin biosynthesis. The chain is Highly reducing polyketide synthase anuA from Penicillium roqueforti (strain FM164).